The primary structure comprises 822 residues: ATP-dependent zinc metalloprotease FTSH 7, chloroplastic (822 aa).

Low complexity-rich tracts occupy residues 1–34 (MASA…RRAS), 80–94 (AEAS…SSSG), and 101–122 (AAAA…AAAT). Disordered regions lie at residues 1-44 (MASA…ASVR) and 67-136 (PAAR…ENKW). The transit peptide at 1–70 (MASASAAAET…RVLRRPPAAR (70 aa)) directs the protein to the chloroplast. 2 helical membrane-spanning segments follow: residues 154-174 (IVQG…IFAL) and 288-308 (GGLL…AVVL). Residue 386 to 393 (GLPGTGKT) participates in ATP binding. Zn(2+) is bound at residue histidine 611. Glutamate 612 is an active-site residue. Zn(2+)-binding residues include histidine 615 and aspartate 694.

The protein in the N-terminal section; belongs to the AAA ATPase family. It in the C-terminal section; belongs to the peptidase M41 family. The cofactor is Zn(2+).

Its subcellular location is the plastid. The protein localises to the chloroplast thylakoid membrane. Its function is as follows. Probable ATP-dependent zinc metallopeptidase. This is ATP-dependent zinc metalloprotease FTSH 7, chloroplastic (FTSH7) from Oryza sativa subsp. japonica (Rice).